The chain runs to 449 residues: Probable glycine dehydrogenase (decarboxylating) subunit 1 (449 aa).

This sequence belongs to the GcvP family. N-terminal subunit subfamily. In terms of assembly, the glycine cleavage system is composed of four proteins: P, T, L and H. In this organism, the P 'protein' is a heterodimer of two subunits.

It carries out the reaction N(6)-[(R)-lipoyl]-L-lysyl-[glycine-cleavage complex H protein] + glycine + H(+) = N(6)-[(R)-S(8)-aminomethyldihydrolipoyl]-L-lysyl-[glycine-cleavage complex H protein] + CO2. The glycine cleavage system catalyzes the degradation of glycine. The P protein binds the alpha-amino group of glycine through its pyridoxal phosphate cofactor; CO(2) is released and the remaining methylamine moiety is then transferred to the lipoamide cofactor of the H protein. The protein is Probable glycine dehydrogenase (decarboxylating) subunit 1 of Rhodospirillum centenum (strain ATCC 51521 / SW).